Consider the following 137-residue polypeptide: Large-conductance mechanosensitive channel (137 aa).

The next 2 membrane-spanning stretches (helical) occupy residues 9–29 (AFAVKGNVVDMAVGIIIGAAF) and 79–99 (IQTILDFVIVAFAIFMGVKAI).

Belongs to the MscL family. As to quaternary structure, homopentamer.

It localises to the cell inner membrane. Its function is as follows. Channel that opens in response to stretch forces in the membrane lipid bilayer. May participate in the regulation of osmotic pressure changes within the cell. This chain is Large-conductance mechanosensitive channel, found in Pseudomonas aeruginosa (strain UCBPP-PA14).